We begin with the raw amino-acid sequence, 678 residues long: Penicillin-binding protein activator LpoA (678 aa).

An N-terminal signal peptide occupies residues 1–26; it reads MVPSTFSRLKAARCLPVVLAALIFAG. Cys-27 is lipidated: N-palmitoyl cysteine. Cys-27 carries S-diacylglycerol cysteine lipidation. Residues 300 to 310 are compositionally biased toward low complexity; sequence AADVAEQPQPQ. Disordered stretches follow at residues 300 to 340 and 496 to 528; these read AADV…PVSA and ALTG…DDQF. Over residues 311–327 the composition is skewed to polar residues; sequence TADSVASPAQASVSDLT. Low complexity-rich tracts occupy residues 330 to 340 and 513 to 528; these read QPAAQPVPVSA and TTNN…DDQF.

It belongs to the LpoA family. As to quaternary structure, interacts with PBP1a.

It localises to the cell outer membrane. Its function is as follows. Regulator of peptidoglycan synthesis that is essential for the function of penicillin-binding protein 1A (PBP1a). The protein is Penicillin-binding protein activator LpoA of Shigella flexneri serotype X (strain 2002017).